A 206-amino-acid chain; its full sequence is Protein GrpE (206 aa).

This sequence belongs to the GrpE family. In terms of assembly, homodimer.

The protein resides in the cytoplasm. Its function is as follows. Participates actively in the response to hyperosmotic and heat shock by preventing the aggregation of stress-denatured proteins, in association with DnaK and GrpE. It is the nucleotide exchange factor for DnaK and may function as a thermosensor. Unfolded proteins bind initially to DnaJ; upon interaction with the DnaJ-bound protein, DnaK hydrolyzes its bound ATP, resulting in the formation of a stable complex. GrpE releases ADP from DnaK; ATP binding to DnaK triggers the release of the substrate protein, thus completing the reaction cycle. Several rounds of ATP-dependent interactions between DnaJ, DnaK and GrpE are required for fully efficient folding. This chain is Protein GrpE, found in Shewanella baltica (strain OS223).